The following is a 349-amino-acid chain: GDP-mannose:glycolipid 4-beta-D-mannosyltransferase (349 aa).

A signal peptide spans 1-14 (MSASASLPVTRAAA).

The protein belongs to the glycosyltransferase 94 family.

It is found in the cell inner membrane. The enzyme catalyses beta-D-GlcA-(1-&gt;2)-alpha-D-Man-(1-&gt;3)-beta-D-Glc-(1-&gt;4)-alpha-D-Glc-di-trans,octa-cis-undecaprenyl diphosphate + GDP-alpha-D-mannose = beta-D-Man-(1-&gt;4)-beta-D-GlcA-(1-&gt;2)-alpha-D-Man-(1-&gt;3)-beta-D-Glc-(1-&gt;4)-alpha-D-Glc-di-trans,octa-cis-undecaprenyl diphosphate + GDP + H(+). Its pathway is glycan biosynthesis; xanthan biosynthesis. In terms of biological role, nonprocessive beta-mannosyltransferase that catalyzes the transfer of a mannose residue from GDP-mannose to glucuronic acid-beta-1,2-mannose-alpha-1,3-glucose-beta-1,4-glucose-PP-polyisoprenyl to form the lipid-linked pentasaccharide repeating unit of xanthan, Man-GlcA-Man-Glc(2)-PP-Pol. Is involved in the biosynthesis of the exopolysaccharide xanthan. The sequence is that of GDP-mannose:glycolipid 4-beta-D-mannosyltransferase (gumI) from Xanthomonas campestris pv. campestris (strain ATCC 33913 / DSM 3586 / NCPPB 528 / LMG 568 / P 25).